We begin with the raw amino-acid sequence, 197 residues long: Phosphoheptose isomerase (197 aa).

In terms of domain architecture, SIS spans Met36–Glu197. Asn51–Gly53 is a binding site for substrate. Residues His60 and Glu64 each contribute to the Zn(2+) site. Substrate is bound by residues Glu64, Asn93–Asp94, Ser119–Ser121, Ser124, and Gln174. Gln174 and His182 together coordinate Zn(2+).

Belongs to the SIS family. GmhA subfamily. As to quaternary structure, homotetramer. Zn(2+) is required as a cofactor.

It is found in the cytoplasm. The enzyme catalyses 2 D-sedoheptulose 7-phosphate = D-glycero-alpha-D-manno-heptose 7-phosphate + D-glycero-beta-D-manno-heptose 7-phosphate. Its pathway is carbohydrate biosynthesis; D-glycero-D-manno-heptose 7-phosphate biosynthesis; D-glycero-alpha-D-manno-heptose 7-phosphate and D-glycero-beta-D-manno-heptose 7-phosphate from sedoheptulose 7-phosphate: step 1/1. Functionally, catalyzes the isomerization of sedoheptulose 7-phosphate in D-glycero-D-manno-heptose 7-phosphate. This chain is Phosphoheptose isomerase, found in Pseudomonas aeruginosa (strain LESB58).